A 378-amino-acid chain; its full sequence is 3-ketosteroid-9-alpha-monooxygenase, oxygenase component (378 aa).

A Rieske domain is found at 26 to 128; the sequence is WHCIGLAKDF…TMERNGVLFV (103 aa). [2Fe-2S] cluster contacts are provided by cysteine 67, histidine 69, cysteine 86, and histidine 89. Asparagine 175, histidine 181, histidine 186, and aspartate 305 together coordinate Fe cation.

Homotrimer. The two-component system 3-ketosteroid-9-alpha-monooxygenase is composed of an oxygenase component KshA and a reductase component KshB. Requires [2Fe-2S] cluster as cofactor. It depends on Fe cation as a cofactor.

The enzyme catalyses androsta-1,4-diene-3,17-dione + 2 reduced [2Fe-2S]-[ferredoxin] + O2 + 2 H(+) = 9alpha-hydroxyandrosta-1,4-diene-3,17-dione + 2 oxidized [2Fe-2S]-[ferredoxin] + H2O. With respect to regulation, KSH activity is completely inhibited by zinc ions. KshA is specifically inhibited by Fe(3+), Co(2+), Zn(2+) and Ni(2+) ions. In terms of biological role, in vitro, catalyzes the introduction of a 9alpha-hydroxyl moiety into the ring B of 3-ketosteroid substrates such as 1,4-androstadiene-3,17-dione (ADD), 4-androstene-3,17-dione (AD), 4-androstene-17beta-ol-3-one (testosterone), 4-pregnene-3,20-dione (progesterone), 19-nor-4-androstene-3,17-dione (nordion), 1-(5alpha)-androstene-3,17-dione, 5alpha-androstane-3,17-dione and 5beta-androstane-3,17-dione. KSH has the highest activity with 3-keto-delta4 steroid substrates. The sequence is that of 3-ketosteroid-9-alpha-monooxygenase, oxygenase component from Rhodococcus rhodochrous.